We begin with the raw amino-acid sequence, 294 residues long: 4-hydroxy-tetrahydrodipicolinate synthase (294 aa).

Thr47 provides a ligand contact to pyruvate. Tyr135 (proton donor/acceptor) is an active-site residue. Lys163 functions as the Schiff-base intermediate with substrate in the catalytic mechanism. Residue Ile206 coordinates pyruvate.

Belongs to the DapA family. As to quaternary structure, homodimer.

The protein localises to the cytoplasm. The catalysed reaction is L-aspartate 4-semialdehyde + pyruvate = (2S,4S)-4-hydroxy-2,3,4,5-tetrahydrodipicolinate + H2O + H(+). Its pathway is amino-acid biosynthesis; L-lysine biosynthesis via DAP pathway; (S)-tetrahydrodipicolinate from L-aspartate: step 3/4. Catalyzes the condensation of (S)-aspartate-beta-semialdehyde [(S)-ASA] and pyruvate to 4-hydroxy-tetrahydrodipicolinate (HTPA). The sequence is that of 4-hydroxy-tetrahydrodipicolinate synthase from Staphylococcus haemolyticus (strain JCSC1435).